The chain runs to 248 residues: Probable transcriptional regulatory protein RPD_4171 (248 aa).

The disordered stretch occupies residues 1–22; it reads MAGHSQFKNIMHRKGKQDAQRS.

It belongs to the TACO1 family.

The protein resides in the cytoplasm. This Rhodopseudomonas palustris (strain BisB5) protein is Probable transcriptional regulatory protein RPD_4171.